The primary structure comprises 268 residues: Thymidylate synthase (268 aa).

Residues R26 and 131–132 contribute to the dUMP site; that span reads RR. Catalysis depends on C151, which acts as the Nucleophile. DUMP contacts are provided by residues 171–174, N182, and 212–214; these read RSAD and HIY. Residue D174 participates in (6R)-5,10-methylene-5,6,7,8-tetrahydrofolate binding. S267 serves as a coordination point for (6R)-5,10-methylene-5,6,7,8-tetrahydrofolate.

It belongs to the thymidylate synthase family. Bacterial-type ThyA subfamily. As to quaternary structure, homodimer.

It is found in the cytoplasm. The catalysed reaction is dUMP + (6R)-5,10-methylene-5,6,7,8-tetrahydrofolate = 7,8-dihydrofolate + dTMP. Its pathway is pyrimidine metabolism; dTTP biosynthesis. Catalyzes the reductive methylation of 2'-deoxyuridine-5'-monophosphate (dUMP) to 2'-deoxythymidine-5'-monophosphate (dTMP) while utilizing 5,10-methylenetetrahydrofolate (mTHF) as the methyl donor and reductant in the reaction, yielding dihydrofolate (DHF) as a by-product. This enzymatic reaction provides an intracellular de novo source of dTMP, an essential precursor for DNA biosynthesis. The polypeptide is Thymidylate synthase (Corynebacterium aurimucosum (strain ATCC 700975 / DSM 44827 / CIP 107346 / CN-1) (Corynebacterium nigricans)).